A 545-amino-acid chain; its full sequence is Solute carrier family 22 member 6 (545 aa).

Residues 1–9 (MAFNDLLKQ) are Cytoplasmic-facing. Residues 10-30 (VGGVGRFQLIQVTMVVAPLLL) traverse the membrane as a helical segment. Residues 31-129 (MASHNTLQNF…LVCSHRAFRQ (99 aa)) lie on the Extracellular side of the membrane. N-linked (GlcNAc...) asparagine glycosylation is found at Asn-39, Asn-56, Asn-86, Asn-91, and Asn-107. The chain crosses the membrane as a helical span at residues 130–150 (LAQSLFMVGVLLGAMMFGYLA). At 151-157 (DRLGRRK) the chain is on the cytoplasmic side. The helical transmembrane segment at 158–177 (VLILNYLQTAVSGTCAAYAP) threads the bilayer. The N-linked (GlcNAc...) asparagine glycan is linked to Asn-178. The Extracellular segment spans residues 178–180 (NYT). A helical transmembrane segment spans residues 181–201 (VYCIFRLLSGMSLASIAINCM). Topologically, residues 202-218 (TLNMEWMPIHTRAYVGT) are cytoplasmic. A helical transmembrane segment spans residues 219–239 (LIGYVYSLGQFLLAGIAYAVP). The Extracellular segment spans residues 240-242 (HWR). The helical transmembrane segment at 243 to 263 (HLQLAVSVPFFVAFIYSWFFI) threads the bilayer. The Cytoplasmic segment spans residues 264 to 331 (ESARWYSSSG…ELLRCPTLRR (68 aa)). The helical transmembrane segment at 332–352 (LFLCLSMLWFATSFAYYGLVM) threads the bilayer. The Extracellular segment spans residues 353-362 (DLQGFGVSMY). The chain crosses the membrane as a helical span at residues 363–383 (LIQVIFGAVDLPAKFVCFLVI). Topologically, residues 384–389 (NSMGRR) are cytoplasmic. The helical transmembrane segment at 390 to 410 (PAQLASLLLAGICILVNGIIP) threads the bilayer. Residues 411 to 419 (RGHTIIRTS) lie on the Extracellular side of the membrane. Residues 420-440 (LAVLGKGCLASSFNCIFLYTG) traverse the membrane as a helical segment. Residues 441 to 450 (ELYPTMIRQT) lie on the Cytoplasmic side of the membrane. Residues 451-471 (GLGMGSTMARVGSIVSPLISM) traverse the membrane as a helical segment. Residues 472-478 (TAEFYPS) are Extracellular-facing. The chain crosses the membrane as a helical span at residues 479–499 (IPLFIFGAVPVAASAVTALLP). Residues 500–545 (ETLGQPLPDTVQDLKSRSRGKQKQQQLEQQKQMIPLQVSTQEKNGL) lie on the Cytoplasmic side of the membrane. Residues 515–545 (SRSRGKQKQQQLEQQKQMIPLQVSTQEKNGL) are disordered. Positions 522–531 (KQQQLEQQKQ) are enriched in low complexity. The segment covering 536 to 545 (QVSTQEKNGL) has biased composition (polar residues).

It belongs to the major facilitator (TC 2.A.1) superfamily. Organic cation transporter (TC 2.A.1.19) family. Post-translationally, glycosylated. Glycosylation is necessary for proper targeting of the transporter to the plasma membrane. As to expression, expressed in kidney. In kidney, restricted to the proximal convoluted tubule (representing S1 and S2 segments). In brain, expressed in neurons of the cortex cerebri and hippocampus as well as in the ependymal cell layer of the choroid plexus.

The protein localises to the basolateral cell membrane. The protein resides in the basal cell membrane. It carries out the reaction (6R)-L-erythro-5,6,7,8-tetrahydrobiopterin(out) + a dicarboxylate(in) = (6R)-L-erythro-5,6,7,8-tetrahydrobiopterin(in) + a dicarboxylate(out). The enzyme catalyses L-erythro-7,8-dihydrobiopterin(out) + a dicarboxylate(in) = L-erythro-7,8-dihydrobiopterin(in) + a dicarboxylate(out). It catalyses the reaction L-sepiapterin(out) + a dicarboxylate(in) = L-sepiapterin(in) + a dicarboxylate(out). The catalysed reaction is prostaglandin F2alpha(out) + a dicarboxylate(in) = prostaglandin F2alpha(in) + a dicarboxylate(out). It carries out the reaction prostaglandin E2(out) + a dicarboxylate(in) = prostaglandin E2(in) + a dicarboxylate(out). The enzyme catalyses 3',5'-cyclic AMP(out) + a dicarboxylate(in) = 3',5'-cyclic AMP(in) + a dicarboxylate(out). It catalyses the reaction 3',5'-cyclic GMP(out) + a dicarboxylate(in) = 3',5'-cyclic GMP(in) + a dicarboxylate(out). The catalysed reaction is urate(out) + a dicarboxylate(in) = urate(in) + a dicarboxylate(out). It carries out the reaction kynurenate(out) + glutarate(in) = kynurenate(in) + glutarate(out). The enzyme catalyses (indol-3-yl)acetate(out) + a dicarboxylate(in) = (indol-3-yl)acetate(in) + a dicarboxylate(out). It catalyses the reaction indoxyl sulfate(out) + a dicarboxylate(in) = indoxyl sulfate(in) + a dicarboxylate(out). The catalysed reaction is N-benzoylglycine(out) + a dicarboxylate(in) = N-benzoylglycine(in) + a dicarboxylate(out). It carries out the reaction 3-carboxy-4-methyl-5-propyl-2-furanpropanoate(out) + a dicarboxylate(in) = 3-carboxy-4-methyl-5-propyl-2-furanpropanoate(in) + a dicarboxylate(out). Its function is as follows. Secondary active transporter that functions as a Na(+)-independent organic anion (OA)/dicarboxylate antiporter where the uptake of one molecule of OA into the cell is coupled with an efflux of one molecule of intracellular dicarboxylate such as 2-oxoglutarate or glutarate. Mediates the uptake of OA across the basolateral side of proximal tubule epithelial cells, thereby contributing to the renal elimination of endogenous OA from the systemic circulation into the urine. Functions as a biopterin transporters involved in the uptake and the secretion of coenzymes tetrahydrobiopterin (BH4), dihydrobiopterin (BH2) and sepiapterin to urine, thereby determining baseline levels of blood biopterins. Transports prostaglandin E2 (PGE2) and prostaglandin F2-alpha (PGF2-alpha) and may contribute to their renal excretion. Involved in the transport of neuroactive tryptophan metabolites kynurenate (KYNA) and xanthurenate (XA). May transport glutamate. Also involved in the disposition of uremic toxins and potentially toxic xenobiotics by the renal organic anion secretory pathway, helping reduce their undesired toxicological effects on the body. Uremic toxins include the indoxyl sulfate (IS), hippurate/N-benzoylglycine (HA), indole acetate (IA) and 3-carboxy-4- methyl-5-propyl-2-furanpropionate(CMPF) and urate. Xenobiotics include the mycotoxin ochratoxin (OTA). May also contribute to the transport of organic compounds in testes across the blood-testis-barrier. The sequence is that of Solute carrier family 22 member 6 from Mus musculus (Mouse).